Here is a 368-residue protein sequence, read N- to C-terminus: Aminomethyltransferase (368 aa).

This sequence belongs to the GcvT family. As to quaternary structure, the glycine cleavage system is composed of four proteins: P, T, L and H.

The enzyme catalyses N(6)-[(R)-S(8)-aminomethyldihydrolipoyl]-L-lysyl-[protein] + (6S)-5,6,7,8-tetrahydrofolate = N(6)-[(R)-dihydrolipoyl]-L-lysyl-[protein] + (6R)-5,10-methylene-5,6,7,8-tetrahydrofolate + NH4(+). The glycine cleavage system catalyzes the degradation of glycine. This is Aminomethyltransferase from Xylella fastidiosa (strain M23).